A 138-amino-acid polypeptide reads, in one-letter code: Thyrotropin subunit beta (138 aa).

Residues 1 to 20 (MTATFLMSMIFGLACGQAMS) form the signal peptide. 6 disulfide bridges follow: cysteine 22–cysteine 72, cysteine 36–cysteine 87, cysteine 39–cysteine 125, cysteine 47–cysteine 103, cysteine 51–cysteine 105, and cysteine 108–cysteine 115. Asparagine 43 is a glycosylation site (N-linked (GlcNAc...) asparagine). Residues 133 to 138 (MVGFSI) constitute a propeptide that is removed on maturation.

This sequence belongs to the glycoprotein hormones subunit beta family. As to quaternary structure, heterodimer of a common alpha chain and a unique beta chain which confers biological specificity to thyrotropin, lutropin, follitropin and gonadotropin.

Its subcellular location is the secreted. Its function is as follows. Indispensable for the control of thyroid structure and metabolism. This chain is Thyrotropin subunit beta (TSHB), found in Bos taurus (Bovine).